The primary structure comprises 587 residues: Glutamine--tRNA ligase (587 aa).

A 'HIGH' region motif is present at residues proline 58 to histidine 68. ATP-binding positions include glutamate 59 to asparagine 61 and histidine 65 to serine 71. Residues aspartate 91 and tyrosine 240 each coordinate L-glutamine. Residues threonine 259 and arginine 294 to leucine 295 each bind ATP. The 'KMSKS' region signature appears at valine 301 to arginine 305.

Belongs to the class-I aminoacyl-tRNA synthetase family. In terms of assembly, monomer.

The protein resides in the cytoplasm. It catalyses the reaction tRNA(Gln) + L-glutamine + ATP = L-glutaminyl-tRNA(Gln) + AMP + diphosphate. This chain is Glutamine--tRNA ligase, found in Bordetella pertussis (strain Tohama I / ATCC BAA-589 / NCTC 13251).